A 296-amino-acid chain; its full sequence is Chronophin (296 aa).

Asp-25 (nucleophile) is an active-site residue. Mg(2+) contacts are provided by Asp-25 and Asn-27. Residue Asn-27 is the Proton donor of the active site. Residues 58-60 (SNN), His-182, and Lys-213 each bind substrate. Asp-238 is a binding site for Mg(2+).

This sequence belongs to the HAD-like hydrolase superfamily. Homodimer. Mg(2+) serves as cofactor. As to expression, detected in brain (at protein level).

It is found in the cytoplasm. Its subcellular location is the cytosol. The protein localises to the cytoskeleton. It localises to the cell projection. The protein resides in the ruffle membrane. It is found in the lamellipodium membrane. Its subcellular location is the cell membrane. It carries out the reaction pyridoxal 5'-phosphate + H2O = pyridoxal + phosphate. The catalysed reaction is pyridoxine 5'-phosphate + H2O = pyridoxine + phosphate. The enzyme catalyses pyridoxamine + phosphate = pyridoxamine 5'-phosphate + H2O. It catalyses the reaction O-phospho-L-seryl-[protein] + H2O = L-seryl-[protein] + phosphate. Its function is as follows. Functions as a pyridoxal phosphate (PLP) phosphatase, which also catalyzes the dephosphorylation of pyridoxine 5'-phosphate (PNP) and pyridoxamine 5'-phosphate (PMP), with order of substrate preference PLP &gt; PNP &gt; PMP and therefore plays a role in vitamin B6 metabolism. Also functions as a protein serine phosphatase that specifically dephosphorylates 'Ser-3' in proteins of the actin-depolymerizing factor (ADF)/cofilin family like CFL1 and DSTN. Thereby, regulates cofilin-dependent actin cytoskeleton reorganization, being required for normal progress through mitosis and normal cytokinesis. Does not dephosphorylate phosphothreonines in LIMK1. Does not dephosphorylate peptides containing phosphotyrosine. The protein is Chronophin of Bos taurus (Bovine).